Consider the following 240-residue polypeptide: Sec-independent protein translocase protein TatC (240 aa).

Transmembrane regions (helical) follow at residues 15–35 (IISI…AKYV), 61–81 (LFIL…PVIL), 103–123 (LLLG…FIVL), 152–172 (FVLK…VLYV), 191–211 (FIVI…TQVL), and 212–232 (MAIP…LATR).

The protein belongs to the TatC family. Forms a complex with TatA.

It is found in the cell inner membrane. Part of the twin-arginine translocation (Tat) system that transports large folded proteins containing a characteristic twin-arginine motif in their signal peptide across membranes. The polypeptide is Sec-independent protein translocase protein TatC (Aquifex aeolicus (strain VF5)).